The chain runs to 398 residues: Lipoyl synthase, mitochondrial (398 aa).

The N-terminal 32 residues, 1 to 32 (MIALRVHNTRVVSRSLTVWTRPSPTLTLSRSL), are a transit peptide targeting the mitochondrion. Residues cysteine 117, cysteine 122, cysteine 128, cysteine 147, cysteine 151, cysteine 154, and serine 362 each contribute to the [4Fe-4S] cluster site. Residues 132 to 351 (KKSEATATIM…RDTALEMGFL (220 aa)) enclose the Radical SAM core domain.

The protein belongs to the radical SAM superfamily. Lipoyl synthase family. Requires [4Fe-4S] cluster as cofactor.

It localises to the mitochondrion. It catalyses the reaction [[Fe-S] cluster scaffold protein carrying a second [4Fe-4S](2+) cluster] + N(6)-octanoyl-L-lysyl-[protein] + 2 oxidized [2Fe-2S]-[ferredoxin] + 2 S-adenosyl-L-methionine + 4 H(+) = [[Fe-S] cluster scaffold protein] + N(6)-[(R)-dihydrolipoyl]-L-lysyl-[protein] + 4 Fe(3+) + 2 hydrogen sulfide + 2 5'-deoxyadenosine + 2 L-methionine + 2 reduced [2Fe-2S]-[ferredoxin]. The protein operates within protein modification; protein lipoylation via endogenous pathway; protein N(6)-(lipoyl)lysine from octanoyl-[acyl-carrier-protein]: step 2/2. Its function is as follows. Catalyzes the radical-mediated insertion of two sulfur atoms into the C-6 and C-8 positions of the octanoyl moiety bound to the lipoyl domains of lipoate-dependent enzymes, thereby converting the octanoylated domains into lipoylated derivatives. In Scheffersomyces stipitis (strain ATCC 58785 / CBS 6054 / NBRC 10063 / NRRL Y-11545) (Yeast), this protein is Lipoyl synthase, mitochondrial.